The sequence spans 485 residues: uncharacterized protein (485 aa).

The Cytoplasmic segment spans residues 1 to 30; that stretch reads MFSWANIGSNEYLPLKNDRKAYLNQWAKRS. A helical transmembrane segment spans residues 31–51; sequence GLAIAAICILGILILAIVKLF. Residues 52-485 lie on the Extracellular side of the membrane; sequence CFKAIIFPIV…DIEQAYSKLI (434 aa). An N-linked (GlcNAc...) asparagine glycan is attached at N67. Residues 74-404 form a phosphodiesterase region; sequence STVIVISLDG…YEPLGVHGYD (331 aa). T118 functions as the Nucleophile in the catalytic mechanism. N306, N338, N453, and N467 each carry an N-linked (GlcNAc...) asparagine glycan.

The protein belongs to the nucleotide pyrophosphatase/phosphodiesterase family.

It is found in the membrane. This is an uncharacterized protein from Schizosaccharomyces pombe (strain 972 / ATCC 24843) (Fission yeast).